Consider the following 370-residue polypeptide: Cap-specific mRNA (nucleoside-2'-O-)-methyltransferase 1 (370 aa).

One can recognise a RrmJ-type SAM-dependent 2'-O-MTase domain in the interval 87-294; it reads AFRNRAGHKL…ERYLVCIGFI (208 aa). S-adenosyl-L-methionine-binding residues include Gly-130 and Asp-207. Residue Lys-248 is the Proton acceptor of the active site.

Component of a complex composed of CBF5, GAR1, NHP2, MTR1, NOP10 and Tb11.01.8210.

The protein resides in the nucleus. The enzyme catalyses a 5'-end (N(7)-methyl 5'-triphosphoguanosine)-ribonucleoside in mRNA + S-adenosyl-L-methionine = a 5'-end (N(7)-methyl 5'-triphosphoguanosine)-(2'-O-methyl-ribonucleoside) in mRNA + S-adenosyl-L-homocysteine + H(+). In terms of biological role, S-adenosyl-L-methionine-dependent methyltransferase that mediates RNA cap1 2'-O-ribose methylation to the 5'-cap structure of spliced leader and U1 small nuclear RNAs. Methylates the ribose of the first nucleotide of a m(7)GpppG-capped RNA to produce m(7)GpppNmp (cap1). Cap1 modification is linked to higher levels of translation. Recognizes a guanosine cap on RNA independent of its N(7) methylation status. The polypeptide is Cap-specific mRNA (nucleoside-2'-O-)-methyltransferase 1 (MTR1) (Trypanosoma brucei brucei (strain 927/4 GUTat10.1)).